The chain runs to 391 residues: MDEEPSGPSLDMPATAEPSSSETDKGVSPVLAAIDKSSSMEEEPGPDRATTPPVWERGGPTGGTQQGASPAPDSGHSGPGHTLGPTSTVSGTSEDLRPTRRRPPPGKQIPCSSPGCCLSFPSVRDLAQHLRTHCPPKQSLEGKLFRCSALSCTETFPNMQELVAHGKLHYKPNRYFKCENCLLRIRTHRSLFKHLHVCAEHAQSPAPPPPPPALDRESPASERPPESDPAPAPGLPYPLLEPFTTPAPAPTGPFLPYLNPAPFGLSPPRLRPFLAAAPGPPASSAAVWKKSQGAGGSPRRPQGGSDAPSGHAAPSRIVWEHTRGRYSCMQCAFSTASRPAMTLHLEDHRPGGPAAPAPGQPRPDAPADPAPLAPKASPLLSEGECPVFSPL.

Residues 1 to 110 (MDEEPSGPSL…RRPPPGKQIP (110 aa)) form a disordered region. The span at 84-93 (GPTSTVSGTS) shows a compositional bias: polar residues. 3 C2H2-type zinc fingers span residues 109–133 (IPCS…LRTH), 145–169 (FRCS…GKLH), and 176–201 (FKCE…CAEH). Disordered stretches follow at residues 201-243 (HAQS…LEPF), 274-312 (LAAA…SGHA), and 344-391 (HLED…FSPL). A compositionally biased stretch (basic and acidic residues) spans 214 to 226 (LDRESPASERPPE). Over residues 227–236 (SDPAPAPGLP) the composition is skewed to pro residues. Positions 274–286 (LAAAPGPPASSAA) are enriched in low complexity. Residues 326–348 (YSCMQCAFSTASRPAMTLHLEDH) form a C2H2-type 4 zinc finger. The segment covering 353 to 372 (PAAPAPGQPRPDAPADPAPL) has biased composition (pro residues).

It belongs to the krueppel C2H2-type zinc-finger protein family.

It is found in the nucleus. Its function is as follows. May be involved in transcriptional regulation. The sequence is that of Zinc finger protein 414 (ZNF414) from Bos taurus (Bovine).